A 1450-amino-acid chain; its full sequence is MDREVHRMASLRREGSMWRSGGDVFSRSSSRFQDEDDDEEALRWAALERLPTYDRVRRGILAVSSEDGGAGGEKVEVDVGRLGARESRALIERLVRAADDDHERFLLKLRERMDRVGIDYPTIEVRFENLEVEADVHVGNRGLPTLLNSVTNTVEAIGNALHILPNKKQPMTVLHDVSGIIKPRRMTLLLGPPGSGKTTLLLALAGKLDKDLKVSGKVTYNGHGMHEFVPERTAAYISQHDLHIGEMTVRETLAFSARCQGVGTRYEMLTELARREKAANIKPDHDIDIYMKASAMGGQESSVVTDYILKILGLDICADTVVGNEMLRGISGGQRKRVTTGEMLVGPARALFMDEISTGLDSSTTYQIVNSLRQTIHILGGTAVISLLQPAPETYNLFDDIILLSDGQVVYQGPREHVLEFFEFMGFRCPARKGVADFLQEVTSRKDQGQYWCRRDRPYRFVPVKQFADAFRSFHVGRSIQNELSEPFDRTRSHPAALATSKYGVSRKELLKATIDRELLLMKRNAFMYIFKAVNLTLMALIVMTTFFRTSMRHDRDYGMIYLGALYFALDTVMFNGFAELAMTVMKLPVFFKQRDLLFFPAWAYTIPSWILQIPITFLEVGVYVFITYYVIGFDPSVSRFFKQYLLLLALNQMSSALFRFIAGIGRDMVVSHTFGPLSLLAFAALGGFILARPDVKKWWIWGYWISPLSYAQNAISTNEFLGHSWSQILPGENVTLGVSVLKSRGIFTEAKWYWIGLGALLGYTLLFNLLYTVALSVLSPFTDSHASMSEDALKEKHANLTGEVVEGQKDTKSRKQELELSHIADQNSGINSADSSASRKGMVLPFAPLSISFNDVRYSVDMPEAMKAQGITEDRLLLLKGVSGSFRPGVLTALMGVSGAGKTTLMDVLAGRKTGGYIEGDIRISGYPKKQETFARISGYCEQNDIHSPHVTVYESLVFSAWLRLPSEVDSEARKMFIEEVMDLVELTSLRGALVGLPGVSGLSTEQRKRLTIAVELVANPSIIFMDEPTSGLDARAAAIVMRTVRNTVNTGRTVVCTIHQPSIDIFEAFDELFLMKRGGEEIYVGPVGQNSSKLIEYFEGIDGVSRIKDGYNPATWMLEVTSSAQEEMLGVDFSEIYRQSELYQRNKELIEELSTPPPGSTDLNFPTQYSRSFITQCLACLWKQNWSYWRNPSYTAVRLLFTIVIALMFGTMFWNLGTRTKKQQDLFNAMGSMYAAVLYIGVQNSGSVQPVVVVERTVFYRERAAGMYSAFPYAFGQVAIELPYIMVQTLIYGVLVYSMIGFEWTVAKFLWYLFFMYFTLLYFTFYGMMAVGLTPNESIAAIISSAFYNVWNLFSGYLIPRPKIPVWWRWYCWICPVAWTLYGLVASQFGDIQHVLEGDTRTVAQFVTDYFGFHHNFLWVVAVVHVVFAVTFAFLFSFAIMKFNFQRR.

An ABC transporter 1 domain is found at 158 to 431 (GNALHILPNK…FEFMGFRCPA (274 aa)). 191–198 (GPPGSGKT) provides a ligand contact to ATP. The ABC transmembrane type-2 1 domain occupies 509-721 (ELLKATIDRE…AQNAISTNEF (213 aa)). 6 consecutive transmembrane segments (helical) span residues 527-547 (FMYI…MTTF), 559-579 (GMIY…NGFA), 614-634 (IPIT…VIGF), 646-666 (LLLL…AGIG), 670-690 (VVSH…GGFI), and 756-776 (IGLG…TVAL). One can recognise an ABC transporter 2 domain in the interval 852–1104 (ISFNDVRYSV…KLIEYFEGID (253 aa)). 897–904 (GVSGAGKT) provides a ligand contact to ATP. In terms of domain architecture, ABC transmembrane type-2 2 spans 1177-1391 (TQCLACLWKQ…TLYGLVASQF (215 aa)). The next 7 helical transmembrane spans lie at 1198 to 1218 (AVRL…FWNL), 1236 to 1256 (YAAV…VVVV), 1284 to 1304 (LPYI…MIGF), 1311 to 1331 (FLWY…YGMM), 1341 to 1361 (IAAI…GYLI), 1372 to 1392 (WYCW…SQFG), and 1422 to 1442 (VVAV…SFAI).

It belongs to the ABC transporter superfamily. ABCG family. PDR (TC 3.A.1.205) subfamily.

It is found in the membrane. Its function is as follows. May be a general defense protein. The polypeptide is ABC transporter G family member 37 (Oryza sativa subsp. japonica (Rice)).